We begin with the raw amino-acid sequence, 151 residues long: Conidium-specific protein (151 aa).

A disordered region spans residues 1 to 72; the sequence is MAKPHCSSRS…FSGDPDSEVE (72 aa). Basic and acidic residues predominate over residues 48–60; the sequence is RKDNSADKGDTLR.

This Emericella nidulans (strain FGSC A4 / ATCC 38163 / CBS 112.46 / NRRL 194 / M139) (Aspergillus nidulans) protein is Conidium-specific protein (SpoC1-C1D).